A 265-amino-acid polypeptide reads, in one-letter code: Synaptoporin (265 aa).

Residues 1-4 (MCMV) are Cytoplasmic-facing. The MARVEL domain maps to 1-202 (MCMVIFAPLF…NIWFVFKETG (202 aa)). Residues 5-25 (IFAPLFAMFAFATCGGYSGGL) traverse the membrane as a helical segment. Over 26 to 81 (RLSVDCVNKTESNLSIDIAFAYPFRLQQVTFEVPTCEGKEQQKLALVGDSSSSAEF) the chain is Vesicular. Residues asparagine 33 and asparagine 38 are each glycosylated (N-linked (GlcNAc...) asparagine). The chain crosses the membrane as a helical span at residues 82-102 (FVTVAVFAFLYSLAATVVYIF). Residues 103 to 114 (FQNKYRENNRGP) are Cytoplasmic-facing. Residues 115 to 135 (LIDFIVTVVFSFLWLVGSSAW) traverse the membrane as a helical segment. At 136 to 177 (AKGLSDVKVATDPKEVLLLMSACKQPSNKCMAVHSPVMSSLN) the chain is on the vesicular side. Residues 178–198 (TSVVFGFLNFILWAGNIWFVF) traverse the membrane as a helical segment. At 199–265 (KETGWHSSGQ…SGPTSFNNQI (67 aa)) the chain is on the cytoplasmic side. A run of 5 repeats spans residues 210 to 214 (YLSDP), 222 to 226 (YNQGR), 227 to 231 (YNQES), 232 to 236 (YGSSG), and 238 to 242 (YSQQA). The tract at residues 210-242 (YLSDPMEKHSSSYNQGRYNQESYGSSGGYSQQA) is 5 X approximate repeats. Serine 212 is subject to Phosphoserine. A compositionally biased stretch (polar residues) spans 221 to 230 (SYNQGRYNQE). Positions 221–265 (SYNQGRYNQESYGSSGGYSQQANLGPTSDEFGQQPSGPTSFNNQI) are disordered. A compositionally biased stretch (polar residues) spans 240–265 (QQANLGPTSDEFGQQPSGPTSFNNQI).

Belongs to the synaptophysin/synaptobrevin family.

Its subcellular location is the cytoplasmic vesicle. The protein localises to the secretory vesicle. The protein resides in the synaptic vesicle membrane. It localises to the synapse. It is found in the synaptosome. Intrinsic membrane protein of small synaptic vesicles. Probable vesicular channel protein. The chain is Synaptoporin (Synpr) from Mus musculus (Mouse).